Reading from the N-terminus, the 202-residue chain is Large ribosomal subunit protein eL13 (202 aa).

The disordered stretch occupies residues 183–202 (GIREKRAKEKAEAEAEKAKK).

Belongs to the eukaryotic ribosomal protein eL13 family. As to quaternary structure, component of the large ribosomal subunit. Mature ribosomes consist of a small (40S) and a large (60S) subunit. The 40S subunit contains about 32 different proteins and 1 molecule of RNA (18S). The 60S subunit contains 45 different proteins and 3 molecules of RNA (25S, 5.8S and 5S).

It localises to the cytoplasm. Its function is as follows. Component of the ribosome, a large ribonucleoprotein complex responsible for the synthesis of proteins in the cell. The small ribosomal subunit (SSU) binds messenger RNAs (mRNAs) and translates the encoded message by selecting cognate aminoacyl-transfer RNA (tRNA) molecules. The large subunit (LSU) contains the ribosomal catalytic site termed the peptidyl transferase center (PTC), which catalyzes the formation of peptide bonds, thereby polymerizing the amino acids delivered by tRNAs into a polypeptide chain. The nascent polypeptides leave the ribosome through a tunnel in the LSU and interact with protein factors that function in enzymatic processing, targeting, and the membrane insertion of nascent chains at the exit of the ribosomal tunnel. In Candida albicans (strain SC5314 / ATCC MYA-2876) (Yeast), this protein is Large ribosomal subunit protein eL13.